Reading from the N-terminus, the 651-residue chain is Threonine--tRNA ligase (651 aa).

In terms of domain architecture, TGS spans 1–61 (MIKITFPDNS…NDDATVKLLK (61 aa)). The interval 242 to 541 (DHRKIGKEMD…LIEHTAGKFP (300 aa)) is catalytic. Zn(2+) contacts are provided by Cys337, His388, and His518.

It belongs to the class-II aminoacyl-tRNA synthetase family. In terms of assembly, homodimer. It depends on Zn(2+) as a cofactor.

It is found in the cytoplasm. It carries out the reaction tRNA(Thr) + L-threonine + ATP = L-threonyl-tRNA(Thr) + AMP + diphosphate + H(+). In terms of biological role, catalyzes the attachment of threonine to tRNA(Thr) in a two-step reaction: L-threonine is first activated by ATP to form Thr-AMP and then transferred to the acceptor end of tRNA(Thr). Also edits incorrectly charged L-seryl-tRNA(Thr). This chain is Threonine--tRNA ligase, found in Parabacteroides distasonis (strain ATCC 8503 / DSM 20701 / CIP 104284 / JCM 5825 / NCTC 11152).